Consider the following 150-residue polypeptide: 3-dehydroquinate dehydratase (150 aa).

The active-site Proton acceptor is Tyr-26. Residues Asn-77, His-83, and Asp-90 each coordinate substrate. The active-site Proton donor is His-103. Residues Leu-104–Ser-105 and Arg-114 each bind substrate.

The protein belongs to the type-II 3-dehydroquinase family. In terms of assembly, homododecamer.

It catalyses the reaction 3-dehydroquinate = 3-dehydroshikimate + H2O. Its pathway is metabolic intermediate biosynthesis; chorismate biosynthesis; chorismate from D-erythrose 4-phosphate and phosphoenolpyruvate: step 3/7. Catalyzes a trans-dehydration via an enolate intermediate. The sequence is that of 3-dehydroquinate dehydratase from Vibrio cholerae serotype O1 (strain ATCC 39541 / Classical Ogawa 395 / O395).